The primary structure comprises 226 residues: Movement and silencing protein TGBp1 (226 aa).

The (+)RNA virus helicase ATP-binding domain occupies 1 to 115; sequence MDILIISLKS…EFSLEPHFYL (115 aa). One can recognise a (+)RNA virus helicase C-terminal domain in the interval 116–226; the sequence is ETSFRVPRKV…KGLTYVRAGT (111 aa).

It belongs to the Tymovirales TGBp1 protein family. As to quaternary structure, homodimer and homooligomer. Interacts with capsid protein. Interacts with host AGO1; this interaction targets the host protein for degradation, thereby suppressing the antiviral RNA silencing.

It is found in the host cytoplasm. Transports viral genome to neighboring plant cells directly through plasmosdesmata, without any budding. The movement protein allows efficient cell to cell propagation, by bypassing the host cell wall barrier. Increases plasmodesma size exclusion limit. Acts as a suppressor of RNA-mediated gene silencing, also known as post-transcriptional gene silencing (PTGS), a mechanism of plant viral defense that limits the accumulation of viral RNAs. The polypeptide is Movement and silencing protein TGBp1 (Brassica campestris (Field mustard)).